Consider the following 152-residue polypeptide: FAD synthase (152 aa).

ATP-binding positions include 16-17 (TF), 21-24 (HPGH), Asp-101, and Tyr-129.

Belongs to the archaeal FAD synthase family. As to quaternary structure, homodimer. A divalent metal cation is required as a cofactor.

The enzyme catalyses FMN + ATP + H(+) = FAD + diphosphate. The protein operates within cofactor biosynthesis; FAD biosynthesis; FAD from FMN: step 1/1. In terms of biological role, catalyzes the transfer of the AMP portion of ATP to flavin mononucleotide (FMN) to produce flavin adenine dinucleotide (FAD) coenzyme. The protein is FAD synthase of Methanocaldococcus vulcanius (strain ATCC 700851 / DSM 12094 / M7) (Methanococcus vulcanius).